The primary structure comprises 317 residues: Retinol dehydrogenase 16 (317 aa).

Phenylalanine 33–leucine 57 is a binding site for NAD(+). Position 164 (serine 164) interacts with substrate. The active-site Proton acceptor is the tyrosine 176. The chain crosses the membrane as a helical span at residues phenylalanine 289–tryptophan 308.

It belongs to the short-chain dehydrogenases/reductases (SDR) family. As to quaternary structure, homodimer. Post-translationally, not N-glycosylated. Liver &gt; kidney &gt; brain &gt; lung &gt; testis.

It is found in the microsome membrane. The protein resides in the endoplasmic reticulum membrane. It carries out the reaction all-trans-retinol--[retinol-binding protein] + NAD(+) = all-trans-retinal--[retinol-binding protein] + NADH + H(+). The enzyme catalyses all-trans-retinol + NAD(+) = all-trans-retinal + NADH + H(+). It catalyses the reaction 13-cis-retinol + NAD(+) = 13-cis-retinal + NADH + H(+). The catalysed reaction is 11-cis-retinol + NAD(+) = 11-cis-retinal + NADH + H(+). It carries out the reaction 9-cis-retinol + NAD(+) = 9-cis-retinal + NADH + H(+). The enzyme catalyses 5alpha-androstane-3alpha,17beta-diol + NAD(+) = 17beta-hydroxy-5alpha-androstan-3-one + NADH + H(+). It catalyses the reaction androsterone + NAD(+) = 5alpha-androstan-3,17-dione + NADH + H(+). It participates in cofactor metabolism; retinol metabolism. Oxidoreductase with a preference for NAD. Oxidizes all-trans-retinol, 9-cis-retinol, 11-cis-retinol and 13-cis-retinol to the corresponding aldehydes. Has higher activity towards CRBP-bound retinol than with free retinol. Oxidizes 3-alpha-hydroxysteroids. Oxidizes androstanediol and androsterone to dihydrotestosterone and androstanedione. Can also catalyze the reverse reaction. The protein is Retinol dehydrogenase 16 of Rattus norvegicus (Rat).